A 125-amino-acid chain; its full sequence is Fluoride-specific ion channel FluC (125 aa).

A run of 4 helical transmembrane segments spans residues 5–25 (ILAICMGASVGALARWGLALW), 37–57 (LAANLVGGYLVGVAIASFHLL), 71–91 (GFLGGLTTFSSFSAEVVTMLL), and 97–117 (VALLTAAAHLGGSLFLTWLGI). Na(+)-binding residues include glycine 74 and threonine 77.

It belongs to the fluoride channel Fluc/FEX (TC 1.A.43) family.

The protein resides in the cell inner membrane. It carries out the reaction fluoride(in) = fluoride(out). Na(+) is not transported, but it plays an essential structural role and its presence is essential for fluoride channel function. Fluoride-specific ion channel. Important for reducing fluoride concentration in the cell, thus reducing its toxicity. This Variovorax paradoxus (strain S110) protein is Fluoride-specific ion channel FluC.